A 279-amino-acid polypeptide reads, in one-letter code: Energy-coupling factor transporter ATP-binding protein EcfA2 (279 aa).

Residues 3 to 245 (ITLKNVSYTY…LDFMESIQLG (243 aa)) form the ABC transporter domain. 40–47 (GHTGSGKS) lines the ATP pocket.

Belongs to the ABC transporter superfamily. Energy-coupling factor EcfA family. In terms of assembly, forms a stable energy-coupling factor (ECF) transporter complex composed of 2 membrane-embedded substrate-binding proteins (S component), 2 ATP-binding proteins (A component) and 2 transmembrane proteins (T component).

It localises to the cell membrane. In terms of biological role, ATP-binding (A) component of a common energy-coupling factor (ECF) ABC-transporter complex. Unlike classic ABC transporters this ECF transporter provides the energy necessary to transport a number of different substrates. This chain is Energy-coupling factor transporter ATP-binding protein EcfA2, found in Streptococcus sanguinis (strain SK36).